A 363-amino-acid chain; its full sequence is SWIRM domain-containing protein YOR338W (363 aa).

2 disordered regions span residues 1–22 (MLDN…GGIN) and 186–208 (LYED…VPVR). Residues 186 to 196 (LYEDDGNRSEN) show a composition bias toward basic and acidic residues. The region spanning 266 to 363 (LKVEWKGSPM…LQDKHFEKYL (98 aa)) is the SWIRM domain.

The polypeptide is SWIRM domain-containing protein YOR338W (Saccharomyces cerevisiae (strain ATCC 204508 / S288c) (Baker's yeast)).